Reading from the N-terminus, the 393-residue chain is Thyrotropin-releasing hormone receptor (393 aa).

At 1-28 (MENDTVSEMNQTELQPQAAVALEYQVVT) the chain is on the extracellular side. N-linked (GlcNAc...) asparagine glycans are attached at residues N3 and N10. The helical transmembrane segment at 29–51 (ILLVVIICGLGIVGNIMVVLVVM) threads the bilayer. The Cytoplasmic segment spans residues 52–61 (RTKHMRTPTN). A helical transmembrane segment spans residues 62 to 83 (CYLVSLAVADLMVLVAAGLPNI). At 84-99 (TDSIYGSWVYGYVGCL) the chain is on the extracellular side. C98 and C179 are oxidised to a cystine. Residues 100–121 (CITYLQYLGINASSCSITAFTI) traverse the membrane as a helical segment. The Cytoplasmic segment spans residues 122–144 (ERYIAICHPIKAQFLCTFSRAKK). A helical membrane pass occupies residues 145–168 (IIIFVWAFTSIYCMLWFFLLDLNI). Residues 169-193 (STYKNAVVVSCGYKISRNYYSPIYL) lie on the Extracellular side of the membrane. Residues 194–215 (MDFGVFYVVPMILATVLYGFIA) traverse the membrane as a helical segment. Over 216 to 266 (RILFLNPIPSDPKENSKMWKNDSIHQNKNLNLNATNRCFNSTVSSRKQVTK) the chain is Cytoplasmic. A helical transmembrane segment spans residues 267 to 288 (MLAVVVILFALLWMPYRTLVVV). The Extracellular segment spans residues 289 to 296 (NSFLSSPF). The helical transmembrane segment at 297-319 (QENWFLLFCRICIYLNSAINPVI) threads the bilayer. The Cytoplasmic portion of the chain corresponds to 320–393 (YNLMSQKFRA…FDDTCLASEN (74 aa)).

The protein belongs to the G-protein coupled receptor 1 family.

It is found in the cell membrane. Functionally, receptor for thyrotropin-releasing hormone (TRH). Upon ligand binding, this G-protein-coupled receptor triggers activation of the phosphatidylinositol (IP3)-calcium-protein kinase C (PKC) pathway. The sequence is that of Thyrotropin-releasing hormone receptor (Trhr) from Mus musculus (Mouse).